We begin with the raw amino-acid sequence, 228 residues long: Phosphoribosylformylglycinamidine synthase subunit PurQ (228 aa).

The Glutamine amidotransferase type-1 domain maps to 3–226 (FAVIVFPGSN…VKYWRETHVV (224 aa)). Cysteine 86 serves as the catalytic Nucleophile. Active-site residues include histidine 195 and glutamate 197.

As to quaternary structure, part of the FGAM synthase complex composed of 1 PurL, 1 PurQ and 2 PurS subunits.

Its subcellular location is the cytoplasm. The enzyme catalyses N(2)-formyl-N(1)-(5-phospho-beta-D-ribosyl)glycinamide + L-glutamine + ATP + H2O = 2-formamido-N(1)-(5-O-phospho-beta-D-ribosyl)acetamidine + L-glutamate + ADP + phosphate + H(+). It catalyses the reaction L-glutamine + H2O = L-glutamate + NH4(+). It participates in purine metabolism; IMP biosynthesis via de novo pathway; 5-amino-1-(5-phospho-D-ribosyl)imidazole from N(2)-formyl-N(1)-(5-phospho-D-ribosyl)glycinamide: step 1/2. Functionally, part of the phosphoribosylformylglycinamidine synthase complex involved in the purines biosynthetic pathway. Catalyzes the ATP-dependent conversion of formylglycinamide ribonucleotide (FGAR) and glutamine to yield formylglycinamidine ribonucleotide (FGAM) and glutamate. The FGAM synthase complex is composed of three subunits. PurQ produces an ammonia molecule by converting glutamine to glutamate. PurL transfers the ammonia molecule to FGAR to form FGAM in an ATP-dependent manner. PurS interacts with PurQ and PurL and is thought to assist in the transfer of the ammonia molecule from PurQ to PurL. The protein is Phosphoribosylformylglycinamidine synthase subunit PurQ of Geobacillus sp. (strain WCH70).